A 162-amino-acid polypeptide reads, in one-letter code: uncharacterized protein (162 aa).

The signal sequence occupies residues 1 to 18 (MRKTFLTLLCVSSAIAHA).

The protein belongs to the fimbrial protein family.

Its function is as follows. Part of the yfcOPQRSUV fimbrial operon. Could contribute to adhesion to various surfaces in specific environmental niches. Increases adhesion to eukaryotic T24 bladder epithelial cells in the absence of fim genes. This is an uncharacterized protein from Escherichia coli (strain K12).